Consider the following 120-residue polypeptide: NAD(P)H-quinone oxidoreductase subunit 3, chloroplastic (120 aa).

3 helical membrane-spanning segments follow: residues 9-29 (IFWAFLIISSLIPILAFLISG), 64-84 (MFALVFVVFDVETVFLYPWAM), and 88-108 (VLGVSVFIEALIFVLIPIIGS).

Belongs to the complex I subunit 3 family. As to quaternary structure, NDH is composed of at least 16 different subunits, 5 of which are encoded in the nucleus.

The protein localises to the plastid. The protein resides in the chloroplast thylakoid membrane. The catalysed reaction is a plastoquinone + NADH + (n+1) H(+)(in) = a plastoquinol + NAD(+) + n H(+)(out). The enzyme catalyses a plastoquinone + NADPH + (n+1) H(+)(in) = a plastoquinol + NADP(+) + n H(+)(out). In terms of biological role, NDH shuttles electrons from NAD(P)H:plastoquinone, via FMN and iron-sulfur (Fe-S) centers, to quinones in the photosynthetic chain and possibly in a chloroplast respiratory chain. The immediate electron acceptor for the enzyme in this species is believed to be plastoquinone. Couples the redox reaction to proton translocation, and thus conserves the redox energy in a proton gradient. The polypeptide is NAD(P)H-quinone oxidoreductase subunit 3, chloroplastic (Drimys granadensis).